The primary structure comprises 457 residues: tRNA-2-methylthio-N(6)-dimethylallyladenosine synthase (457 aa).

An MTTase N-terminal domain is found at 3-120 (KKVYVKTFGC…LPQMIDARRA (118 aa)). Positions 12, 49, 83, 157, 161, and 164 each coordinate [4Fe-4S] cluster. The 235-residue stretch at 143 to 377 (RVEGPSAFVS…QATIEENVAR (235 aa)) folds into the Radical SAM core domain. Residues 380-447 (QSMVGKVERI…PHSLRGELLL (68 aa)) enclose the TRAM domain.

The protein belongs to the methylthiotransferase family. MiaB subfamily. Monomer. [4Fe-4S] cluster serves as cofactor.

It localises to the cytoplasm. The enzyme catalyses N(6)-dimethylallyladenosine(37) in tRNA + (sulfur carrier)-SH + AH2 + 2 S-adenosyl-L-methionine = 2-methylsulfanyl-N(6)-dimethylallyladenosine(37) in tRNA + (sulfur carrier)-H + 5'-deoxyadenosine + L-methionine + A + S-adenosyl-L-homocysteine + 2 H(+). Catalyzes the methylthiolation of N6-(dimethylallyl)adenosine (i(6)A), leading to the formation of 2-methylthio-N6-(dimethylallyl)adenosine (ms(2)i(6)A) at position 37 in tRNAs that read codons beginning with uridine. The polypeptide is tRNA-2-methylthio-N(6)-dimethylallyladenosine synthase (Burkholderia vietnamiensis (strain G4 / LMG 22486) (Burkholderia cepacia (strain R1808))).